Reading from the N-terminus, the 229-residue chain is E3 ubiquitin-protein ligase RNF114 (229 aa).

The tract at residues Met1–Asp23 is disordered. Residues Cys30–Arg69 form an RING-type zinc finger. 2 residues coordinate Zn(2+): Cys92 and Cys95. The segment at Cys92 to Cys111 adopts a C2HC RNF-type zinc-finger fold. Lys103 is subject to N6-acetyllysine. Residues His107 and Cys111 each contribute to the Zn(2+) site. Lys113 carries the N6-acetyllysine modification.

As to quaternary structure, interacts with XAF1, the interaction increases XAF1 stability and proapoptotic effects, and may regulate IFN signaling. Autoubiquitinated. Polyubiquitinated in the presence of E2 enzymes UBE2D1, UBE2D2 and UBE2D3, but only monoubiquitinated in the presence of UBE2E1.

The protein localises to the cytoplasm. It is found in the nucleus. It carries out the reaction S-ubiquitinyl-[E2 ubiquitin-conjugating enzyme]-L-cysteine + [acceptor protein]-L-lysine = [E2 ubiquitin-conjugating enzyme]-L-cysteine + N(6)-ubiquitinyl-[acceptor protein]-L-lysine.. Its pathway is protein modification; protein ubiquitination. In terms of biological role, E3 ubiquitin-protein ligase that promotes the ubiquitination of various substrates. In turn, participates in the regulation of many biological processes including cell cycle, apoptosis, osteoclastogenesis as well as innate or adaptive immunity. Acts as negative regulator of NF-kappa-B-dependent transcription by promoting the ubiquitination and stabilization of the NF-kappa-B inhibitor TNFAIP3. May promote the ubiquitination of TRAF6 as well. Also acts as a negative regulator of T-cell activation. Inhibits cellular dsRNA responses and interferon production by targeting MAVS component for proteasomal degradation. Ubiquitinates the CDK inhibitor CDKN1A leading to its degradationand probably also CDKN1B and CDKN1C. This activity stimulates cell cycle G1-to-S phase transition and suppresses cellular senescence. May play a role in spermatogenesis. The sequence is that of E3 ubiquitin-protein ligase RNF114 (Rnf114) from Mus musculus (Mouse).